The sequence spans 121 residues: Large ribosomal subunit protein uL14 (121 aa).

Belongs to the universal ribosomal protein uL14 family. In terms of assembly, part of the 50S ribosomal subunit. Forms a cluster with proteins L3 and L19. In the 70S ribosome, L14 and L19 interact and together make contacts with the 16S rRNA in bridges B5 and B8.

Its function is as follows. Binds to 23S rRNA. Forms part of two intersubunit bridges in the 70S ribosome. The protein is Large ribosomal subunit protein uL14 of Synechococcus sp. (strain CC9605).